The sequence spans 80 residues: Defensin-like protein CAL1 (80 aa).

A signal peptide spans 1–31 (MAPSRRMVASAFLLLAILVATEMGTTKVAEA). 4 disulfide bridges follow: Cys-34/Cys-80, Cys-45/Cys-65, Cys-51/Cys-74, and Cys-55/Cys-76.

It belongs to the DEFL family. As to expression, expressed preferentially in root exodermis and xylem parenchyma cells in vasculature of root and flag leaf sheath.

The protein resides in the secreted. Its subcellular location is the extracellular space. Its function is as follows. Plant defensin-like protein involved in accumulation of cadmium (Cd) in rice leaves. Mediates Cd efflux from cytosol into extracellular spaces via chelation. This drives Cd secretion from xylem parenchyma cells into the xylem vessels, hence lowering Cd levels in cytosol meanwhile promoting Cd translocation from roots to shoots. The polypeptide is Defensin-like protein CAL1 (Oryza sativa subsp. japonica (Rice)).